Reading from the N-terminus, the 282-residue chain is MEMO1 family protein Cmaq_1590 (282 aa).

The protein belongs to the MEMO1 family.

The polypeptide is MEMO1 family protein Cmaq_1590 (Caldivirga maquilingensis (strain ATCC 700844 / DSM 13496 / JCM 10307 / IC-167)).